The chain runs to 129 residues: Ribosome-binding factor A (129 aa).

Belongs to the RbfA family. Monomer. Binds 30S ribosomal subunits, but not 50S ribosomal subunits or 70S ribosomes.

It localises to the cytoplasm. Its function is as follows. One of several proteins that assist in the late maturation steps of the functional core of the 30S ribosomal subunit. Associates with free 30S ribosomal subunits (but not with 30S subunits that are part of 70S ribosomes or polysomes). Required for efficient processing of 16S rRNA. May interact with the 5'-terminal helix region of 16S rRNA. This chain is Ribosome-binding factor A, found in Ectopseudomonas mendocina (strain ymp) (Pseudomonas mendocina).